Consider the following 393-residue polypeptide: CCA-adding enzyme (393 aa).

ATP is bound by residues glycine 27 and arginine 30. Glycine 27 and arginine 30 together coordinate CTP. Mg(2+) is bound by residues aspartate 40 and aspartate 42. Residues arginine 111, aspartate 154, arginine 157, arginine 160, and arginine 163 each contribute to the ATP site. CTP is bound by residues arginine 111, aspartate 154, arginine 157, arginine 160, and arginine 163.

Belongs to the tRNA nucleotidyltransferase/poly(A) polymerase family. Bacterial CCA-adding enzyme type 3 subfamily. In terms of assembly, homodimer. Mg(2+) serves as cofactor.

It carries out the reaction a tRNA precursor + 2 CTP + ATP = a tRNA with a 3' CCA end + 3 diphosphate. The catalysed reaction is a tRNA with a 3' CCA end + 2 CTP + ATP = a tRNA with a 3' CCACCA end + 3 diphosphate. Functionally, catalyzes the addition and repair of the essential 3'-terminal CCA sequence in tRNAs without using a nucleic acid template. Adds these three nucleotides in the order of C, C, and A to the tRNA nucleotide-73, using CTP and ATP as substrates and producing inorganic pyrophosphate. tRNA 3'-terminal CCA addition is required both for tRNA processing and repair. Also involved in tRNA surveillance by mediating tandem CCA addition to generate a CCACCA at the 3' terminus of unstable tRNAs. While stable tRNAs receive only 3'-terminal CCA, unstable tRNAs are marked with CCACCA and rapidly degraded. In Listeria monocytogenes serotype 4b (strain F2365), this protein is CCA-adding enzyme.